Reading from the N-terminus, the 453-residue chain is Serine/threonine-protein phosphatase 2A 55 kDa regulatory subunit B delta isoform (453 aa).

WD repeat units follow at residues 32–71, 97–138, 181–219, and 230–270; these read AEADIISTVEFNYSGDLLATGDKGGRVVIFQREQENKSRP, EIEE…KRAE, AHTYHINSISVNSDHETYLSADDLRINLWHLEITDRSFN, and ELTE…LCDR. A Phosphoserine modification is found at S285. WD repeat units lie at residues 289-327, 344-385, and 420-452; these read EIISSISDVKFSHSGRYMMTRDYLSVKVWDLNMESRPVE, ENDC…DVTL, and DFNKKILHTAWHPVDNVIAVAATNNLYIFQDKI. A Phosphotyrosine modification is found at Y305. T308 carries the post-translational modification Phosphothreonine.

The protein belongs to the phosphatase 2A regulatory subunit B family. PP2A consists of a common heterodimeric core enzyme, composed of a 36 kDa catalytic subunit (subunit C) and a 65 kDa constant regulatory subunit (PR65 or subunit A), that associates with a variety of regulatory subunits. Proteins that associate with the core dimer include three families of regulatory subunits B (the R2/B/PR55/B55, R3/B''/PR72/PR130/PR59 and R5/B'/B56 families), the 48 kDa variable regulatory subunit, viral proteins, and cell signaling molecules. Interacts with ENSA (when phosphorylated at 'Ser-67') and ARPP19 (when phosphorylated at 'Ser-62'), leading to inhibit PP2A activity. Interacts with IER5.

It localises to the cytoplasm. Functionally, substrate-recognition subunit of protein phosphatase 2A (PP2A) that plays a key role in cell cycle by controlling mitosis entry and exit. Involved in chromosome clustering during late mitosis by mediating dephosphorylation of MKI67. The activity of PP2A complexes containing PPP2R2D (PR55-delta) fluctuate during the cell cycle: the activity is high in interphase and low in mitosis. In Homo sapiens (Human), this protein is Serine/threonine-protein phosphatase 2A 55 kDa regulatory subunit B delta isoform (PPP2R2D).